The chain runs to 244 residues: MAGHSKWANIKHRKGAQDAARSKIFMKLSKEIFVAASGPGGADPETNPSLRLAVSKAKAQSMPKANIEKALSKASGNSKNASEFKELIYSGSLPGGAIILVICLTDNLNRAISNIKAAFSKIGGQLGKSGSIPYIFERKGVLDILKEEYENSDQLMLEALDAGAEDVQTFEDFSRIITNPSNFQEVKDKIDKALSLENYATAEIQYLPNTTVSFEKEKLEKLETWIETLEDNEDVQEIYHNIDF.

Belongs to the TACO1 family.

Its subcellular location is the cytoplasm. This is Probable transcriptional regulatory protein MMOB1910 from Mycoplasma mobile (strain ATCC 43663 / 163K / NCTC 11711) (Mesomycoplasma mobile).